We begin with the raw amino-acid sequence, 631 residues long: MGVLSRVDTPEDVRRLNVAELRELAEEIREFLVRKVAATGGHLGPNLGVVELTIALHRVFDSPADPLIFDTGHQAYVHKILTGRKDRFDDLRKQGGLSGYPSRAESPHDWVESSHASAALSYADGLAKAFALGGQDRHVVAVVGDGALTGGMCWEALNNIAAAPDRPVVVVVNDNGRSYAPTIGGLADRLTALRTQPAYEHALDAGKRLLKSIPRVGESAYSMVHAVKAGIKDAVSPQELFSDLGLKYVGPVDGHDVVAMESALRRAKDFGGPVVVHAVTQKGRGYEHAENHVADQMHACDPIDPLTGRPLGGAKARGWTSVFSEELIEHARRRSDIVAITAAMPGPTGLSAFGERFPDRMFDVGIAEQHAMASAAGLALGGMHPVVAIYSTFLNRAFDQLLMDVALLKQPVTVVLDRAGITGPDGASHNGMWDLSLLGIIPGIRVAAPRDAATLREELGEALAVTDGPTVLRFPKGSVAEDLTAVERIDGVDVLRAADPESAVRTQRGDVLIVAVGPFARIGLAAAELLAPEGVSVTVVDPRWVLPVSDTVVKLAENYRLVVTLEDSGLHGGIGSTVSARLRSVGLDVPTRDLGVPQQFLDHASRDQVLEQLGLTPTDVARRIAGWLDAR.

Thiamine diphosphate-binding positions include His73 and 114-116 (SHA). Asp145 serves as a coordination point for Mg(2+). Thiamine diphosphate contacts are provided by residues 146–147 (GA), Asn175, Tyr286, and Glu368. Position 175 (Asn175) interacts with Mg(2+).

Belongs to the transketolase family. DXPS subfamily. Homodimer. Mg(2+) is required as a cofactor. Thiamine diphosphate serves as cofactor.

It carries out the reaction D-glyceraldehyde 3-phosphate + pyruvate + H(+) = 1-deoxy-D-xylulose 5-phosphate + CO2. The protein operates within metabolic intermediate biosynthesis; 1-deoxy-D-xylulose 5-phosphate biosynthesis; 1-deoxy-D-xylulose 5-phosphate from D-glyceraldehyde 3-phosphate and pyruvate: step 1/1. Its function is as follows. Catalyzes the acyloin condensation reaction between C atoms 2 and 3 of pyruvate and glyceraldehyde 3-phosphate to yield 1-deoxy-D-xylulose-5-phosphate (DXP). This Nocardia farcinica (strain IFM 10152) protein is 1-deoxy-D-xylulose-5-phosphate synthase.